Consider the following 499-residue polypeptide: Hepatic triacylglycerol lipase (499 aa).

The first 22 residues, 1–22 (MDTSPLCFSILLVLCIFIQSSA), serve as a signal peptide directing secretion. Residues Asn42 and Asn78 are each glycosylated (N-linked (GlcNAc...) asparagine). Catalysis depends on Ser168, which acts as the Nucleophile. Asp194 functions as the Charge relay system in the catalytic mechanism. The interval 254 to 277 (CHFLELYRHIAQHGFNAITQTIKC) is essential for determining substrate specificity. The active-site Charge relay system is His279. The PLAT domain maps to 352-486 (YHYQFKIQFI…RPTQEKIFVK (135 aa)). Residues Asn362 and Asn397 are each glycosylated (N-linked (GlcNAc...) asparagine).

It belongs to the AB hydrolase superfamily. Lipase family. Homodimer.

The protein localises to the secreted. It catalyses the reaction a triacylglycerol + H2O = a diacylglycerol + a fatty acid + H(+). The enzyme catalyses a 1-acyl-sn-glycero-3-phosphocholine + H2O = sn-glycerol 3-phosphocholine + a fatty acid + H(+). The catalysed reaction is a 1,2-diacyl-sn-glycero-3-phosphocholine + H2O = a 2-acyl-sn-glycero-3-phosphocholine + a fatty acid + H(+). It carries out the reaction 1,2,3-tri-(9Z-octadecenoyl)-glycerol + H2O = di-(9Z)-octadecenoylglycerol + (9Z)-octadecenoate + H(+). It catalyses the reaction 1,2-di-(9Z-octadecenoyl)-sn-glycero-3-phosphocholine + H2O = (9Z-octadecenoyl)-sn-glycero-3-phosphocholine + (9Z)-octadecenoate + H(+). The enzyme catalyses 1,2,3-tributanoylglycerol + H2O = dibutanoylglycerol + butanoate + H(+). The catalysed reaction is 1,2-dihexadecanoyl-sn-glycero-3-phosphocholine + H2O = hexadecanoyl-sn-glycero-3-phosphocholine + hexadecanoate + H(+). It carries out the reaction 1,2-di-(9Z-octadecenoyl)-sn-glycerol + H2O = 2-(9Z-octadecenoyl)-glycerol + (9Z)-octadecenoate + H(+). It catalyses the reaction 1,2,3-tri-(9Z-octadecenoyl)-glycerol + H2O = 2,3-di-(9Z)-octadecenoyl-sn-glycerol + (9Z)-octadecenoate + H(+). The enzyme catalyses 1-(9Z-octadecenoyl)-sn-glycero-3-phospho-L-serine + H2O = sn-glycero-3-phospho-L-serine + (9Z)-octadecenoate + H(+). The catalysed reaction is 1-hexadecanoyl-sn-glycero-3-phosphocholine + H2O = sn-glycerol 3-phosphocholine + hexadecanoate + H(+). It carries out the reaction 1,3-di-(9Z-octadecenoyl)-glycerol + H2O = 3-(9Z-octadecenoyl)-sn-glycerol + (9Z)-octadecenoate + H(+). Phospholipase A1 and triacylglycerol lipase are inhibited by sphingomyelin. Catalyzes the hydrolysis of triglycerides and phospholipids present in circulating plasma lipoproteins, including chylomicrons, intermediate density lipoproteins (IDL), low density lipoproteins (LDL) of large size and high density lipoproteins (HDL), releasing free fatty acids (FFA) and smaller lipoprotein particles. Also exhibits lysophospholipase activity. Can hydrolyze both neutral lipid and phospholipid substrates but shows a greater binding affinity for neutral lipid substrates than phospholipid substrates. In native LDL, preferentially hydrolyzes the phosphatidylcholine species containing polyunsaturated fatty acids at sn-2 position. The sequence is that of Hepatic triacylglycerol lipase (LIPC) from Homo sapiens (Human).